The following is a 263-amino-acid chain: ATP synthase subunit a (263 aa).

Residues 1–14 (MYLNNNNNMKYYIN) constitute a propeptide, removed in mature form. Transmembrane regions (helical) follow at residues 35–57 (FSFINITNFGLYTMITLLVILTM), 95–117 (VWGYYFPLVYTFFITIFTMNLIS), 129–151 (VVFVVSMSMIIWLGTTIIGFYTH), 156–178 (FGLFLPTGTPLILVPLLVSIELL), 191–213 (LSANIMAGHLLIVILGGLLFNLM), and 228–250 (IAILGIVCLEFAITIIQAYVWCI).

This sequence belongs to the ATPase A chain family. As to quaternary structure, F-type ATPases have 2 components, CF(1) - the catalytic core - and CF(0) - the membrane proton channel. In yeast, the dimeric form of ATP synthase consists of 18 polypeptides: alpha, beta, gamma, delta, epsilon, 4 (B), 5 (OSCP), 6 (A), 8, 9 (C), d, E (Tim11), f, g, h, i, j and k.

It is found in the mitochondrion inner membrane. Functionally, mitochondrial membrane ATP synthase (F(1)F(0) ATP synthase or Complex V) produces ATP from ADP in the presence of a proton gradient across the membrane which is generated by electron transport complexes of the respiratory chain. F-type ATPases consist of two structural domains, F(1) - containing the extramembraneous catalytic core and F(0) - containing the membrane proton channel, linked together by a central stalk and a peripheral stalk. During catalysis, ATP synthesis in the catalytic domain of F(1) is coupled via a rotary mechanism of the central stalk subunits to proton translocation. Key component of the proton channel; it may play a direct role in the translocation of protons across the membrane. The chain is ATP synthase subunit a (ATP6) from Eremothecium gossypii (strain ATCC 10895 / CBS 109.51 / FGSC 9923 / NRRL Y-1056) (Yeast).